The sequence spans 1362 residues: DNA-directed RNA polymerase subunit beta' (1362 aa).

Positions 1–14 (MTSSSKSRKSKSSK) are enriched in basic residues. Positions 1 to 39 (MTSSSKSRKSKSSKASKAAKEAPVSASRPLSKTPPPFRN) are disordered. Residues 15 to 27 (ASKAAKEAPVSAS) are compositionally biased toward low complexity. Positions 248, 315, 322, and 325 each coordinate Zn(2+). Positions 1316-1336 (TRHNIDPSASNFAAFTRPDAD) are disordered.

This sequence belongs to the RNA polymerase beta' chain family. RpoC2 subfamily. In terms of assembly, in cyanobacteria the RNAP catalytic core is composed of 2 alpha, 1 beta, 1 beta', 1 gamma and 1 omega subunit. When a sigma factor is associated with the core the holoenzyme is formed, which can initiate transcription. Requires Zn(2+) as cofactor.

The enzyme catalyses RNA(n) + a ribonucleoside 5'-triphosphate = RNA(n+1) + diphosphate. DNA-dependent RNA polymerase catalyzes the transcription of DNA into RNA using the four ribonucleoside triphosphates as substrates. The sequence is that of DNA-directed RNA polymerase subunit beta' from Synechococcus sp. (strain CC9605).